The following is a 95-amino-acid chain: Small ribosomal subunit protein bS18 (95 aa).

It belongs to the bacterial ribosomal protein bS18 family. As to quaternary structure, part of the 30S ribosomal subunit. Forms a tight heterodimer with protein bS6.

Functionally, binds as a heterodimer with protein bS6 to the central domain of the 16S rRNA, where it helps stabilize the platform of the 30S subunit. The polypeptide is Small ribosomal subunit protein bS18 (Rickettsia canadensis (strain McKiel)).